We begin with the raw amino-acid sequence, 254 residues long: Decaprenylphosphoryl-2-keto-beta-D-erythro-pentose reductase (254 aa).

Asp-67 contacts NAD(+). Tyr-160 serves as the catalytic Proton acceptor. An NAD(+)-binding site is contributed by Lys-164.

This sequence belongs to the short-chain dehydrogenases/reductases (SDR) family. Interacts with DprE1 to form an epimerase complex.

Its subcellular location is the periplasm. It catalyses the reaction trans,octa-cis-decaprenylphospho-beta-D-arabinofuranose + NAD(+) = trans,octa-cis-decaprenylphospho-beta-D-erythro-pentofuranosid-2-ulose + NADH + H(+). It functions in the pathway cell wall biogenesis; cell wall polysaccharide biosynthesis. Its function is as follows. Component of the DprE1-DprE2 complex that catalyzes the 2-step epimerization of decaprenyl-phospho-ribose (DPR) to decaprenyl-phospho-arabinose (DPA), a key precursor that serves as the arabinose donor required for the synthesis of cell-wall arabinans. DprE1 catalyzes the first step of epimerization, namely FAD-dependent oxidation of the C2' hydroxyl of DPR to yield the keto intermediate decaprenyl-phospho-2'-keto-D-arabinose (DPX). The intermediate DPX is then transferred to DprE2 subunit of the epimerase complex, most probably through a 'substrate channel' at the interface of DprE1-DprE2 complex. DprE2 then catalyzes the second step of epimerization, the NAD(+)-dependent reduction of DPX that leads to the formation of DPA. The protein is Decaprenylphosphoryl-2-keto-beta-D-erythro-pentose reductase of Mycobacterium bovis (strain ATCC BAA-935 / AF2122/97).